The sequence spans 575 residues: Muellerian-inhibiting factor (575 aa).

The first 24 residues, 1 to 24 (MPGPSLSLALVLSAMGALLRPGTP), serve as a signal peptide directing secretion. A propeptide spanning residues 25 to 466 (REEVFSTSAL…ERSGSARAQR (442 aa)) is cleaved from the precursor. Asn-78 and Asn-344 each carry an N-linked (GlcNAc...) asparagine glycan. 3 disulfides stabilise this stretch: Cys-477/Cys-541, Cys-503/Cys-572, and Cys-507/Cys-574.

It belongs to the TGF-beta family. In terms of assembly, homodimer; disulfide-linked. In terms of processing, preproprotein is proteolytically processed to generate N- and C-terminal cleavage products that homodimerize and associate to form a biologically active non-covalent complex. Binding of the non-covalent complex to AMHR2 induces dissociation of the pro-region from the mature C-terminal dimer. The N-terminal portion of the protein, despite having no intrinsic activity, has the role of amplifying the activity of the C-terminus. In terms of tissue distribution, expressed in fetal testis and adult ovaries.

It is found in the secreted. In terms of biological role, plays an important role in several reproductive functions. Induces Muellerian duct regression during male fetal sexual differentiation and plays a role in Leydig cell differentiation and function. In female acts as a negative regulator of the primordial to primary follicle transition and decreases FSH sensitivity of growing follicles. AMH signals by binding to a specific type-II receptor, AMHR2, that heterodimerizes with type-I receptors (ACVR1 and BMPR1A), and recruiting SMAD proteins that are translocated to the nucleus to regulate target gene expression. In Bos taurus (Bovine), this protein is Muellerian-inhibiting factor (AMH).